The chain runs to 558 residues: C4b-binding protein alpha chain (558 aa).

The N-terminal stretch at 1 to 13 is a signal peptide; the sequence is MSLTAALWVAVFG. Sushi domains lie at 14–74, 75–136, 137–201, 202–260, 261–326, 327–388, 389–445, and 446–503; these read KCGP…ACVK, KSCR…ECVI, AKCG…TCER, IICP…VCEL, NSCT…GCKE, ICCP…SCHQ, SCDF…QCKA, and LCRK…RCEQ. Cystine bridges form between cysteine 15/cysteine 60, cysteine 45/cysteine 72, cysteine 77/cysteine 118, cysteine 104/cysteine 134, cysteine 139/cysteine 182, cysteine 168/cysteine 199, cysteine 204/cysteine 246, cysteine 232/cysteine 258, cysteine 263/cysteine 312, cysteine 296/cysteine 324, cysteine 329/cysteine 373, cysteine 363/cysteine 386, cysteine 390/cysteine 431, cysteine 417/cysteine 443, cysteine 447/cysteine 488, and cysteine 474/cysteine 501. A glycan (N-linked (GlcNAc...) asparagine) is linked at asparagine 31. N-linked (GlcNAc...) asparagine glycosylation is found at asparagine 177 and asparagine 186. N-linked (GlcNAc...) asparagine glycans are attached at residues asparagine 469 and asparagine 491.

Disulfide-linked complex of alpha and beta chains.

The protein resides in the secreted. In terms of biological role, controls the classical pathway of complement activation. It binds as a cofactor to C3b/C4b inactivator (C3bINA), which then hydrolyzes the complement fragment C4b. It also accelerates the degradation of the C4bC2a complex (C3 convertase) by dissociating the complement fragment C2a. Alpha chain binds C4b. It also interacts with anticoagulant protein S and with serum amyloid P component. This Rattus norvegicus (Rat) protein is C4b-binding protein alpha chain (C4bpa).